The chain runs to 388 residues: Quinolone resistance protein NorA (388 aa).

12 helical membrane passes run 5–25, 42–62, 69–89, 99–119, 129–149, 157–177, 201–221, 239–259, 269–289, 293–313, 331–351, and 355–375; these read IFVL…VIPV, LLVA…GTLA, LIIC…AVGH, VIGG…IADI, FGYM…IGGF, MPFY…IVLI, WKVF…LSAF, DISI…IYFF, LTFI…LVFA, WSIM…RPAI, LNST…GALF, and IEAP…IVLI.

It belongs to the major facilitator superfamily. TCR/Tet family.

It localises to the cell membrane. Functionally, involved in quinolone resistance. May constitute a membrane-associated active efflux pump of hydrophilic quinolones. This Staphylococcus aureus (strain MSSA476) protein is Quinolone resistance protein NorA (norA).